A 60-amino-acid polypeptide reads, in one-letter code: MAVPKQKRSRSRTHTKRAKIYRTVSVPISKCPNCGQPKLPHRVCLHCGYYNGKQILEIAE.

The protein belongs to the bacterial ribosomal protein bL32 family.

The polypeptide is Large ribosomal subunit protein bL32 (Pseudothermotoga lettingae (strain ATCC BAA-301 / DSM 14385 / NBRC 107922 / TMO) (Thermotoga lettingae)).